A 409-amino-acid chain; its full sequence is Casein kinase I isoform delta-B (409 aa).

In terms of domain architecture, Protein kinase spans 9 to 277 (YRLGRKIGSG…YLRQLFRNLF (269 aa)). ATP is bound by residues 15 to 23 (IGSGSFGDI) and Lys38. Asp128 functions as the Proton acceptor in the catalytic mechanism. Basic and acidic residues predominate over residues 300–315 (TAEEADRERRERDERM). Positions 300–409 (TAEEADRERR…NSIPFDHHGK (110 aa)) are disordered. The tract at residues 317 to 341 (HSRNPAARGIPAASGRPRPTQDGAP) is autoinhibitory. 2 stretches are compositionally biased toward polar residues: residues 346–358 (TPTSHTANTSSPR) and 380–402 (NVSSSDLTGRQDTSRMSTSQNSI).

The protein belongs to the protein kinase superfamily. In terms of assembly, monomer. Interacts with per1 and per2. Component of the circadian core oscillator. Autophosphorylated on serine and threonine residues.

It localises to the cytoplasm. It is found in the nucleus. The enzyme catalyses L-seryl-[protein] + ATP = O-phospho-L-seryl-[protein] + ADP + H(+). It catalyses the reaction L-threonyl-[protein] + ATP = O-phospho-L-threonyl-[protein] + ADP + H(+). With respect to regulation, exhibits substrate-dependent heparin activation. In terms of biological role, casein kinases are operationally defined by their preferential utilization of acidic proteins such as caseins as substrates. Central component of the circadian clock. May act as a negative regulator of circadian rhythmicity by phosphorylating per1 and per2, which may lead to their degradation. Participates in wnt signaling. This chain is Casein kinase I isoform delta-B (csnk1db), found in Danio rerio (Zebrafish).